We begin with the raw amino-acid sequence, 158 residues long: Transcription elongation factor GreA (158 aa).

This sequence belongs to the GreA/GreB family.

Functionally, necessary for efficient RNA polymerase transcription elongation past template-encoded arresting sites. The arresting sites in DNA have the property of trapping a certain fraction of elongating RNA polymerases that pass through, resulting in locked ternary complexes. Cleavage of the nascent transcript by cleavage factors such as GreA or GreB allows the resumption of elongation from the new 3'terminus. GreA releases sequences of 2 to 3 nucleotides. In Wigglesworthia glossinidia brevipalpis, this protein is Transcription elongation factor GreA.